A 73-amino-acid chain; its full sequence is Large ribosomal subunit protein bL31 (73 aa).

It belongs to the bacterial ribosomal protein bL31 family. Type A subfamily. Part of the 50S ribosomal subunit.

In terms of biological role, binds the 23S rRNA. This is Large ribosomal subunit protein bL31 from Rhizobium johnstonii (strain DSM 114642 / LMG 32736 / 3841) (Rhizobium leguminosarum bv. viciae).